The following is a 346-amino-acid chain: N-acetyl-gamma-glutamyl-phosphate reductase (346 aa).

C150 is an active-site residue.

Belongs to the NAGSA dehydrogenase family. Type 1 subfamily.

It localises to the cytoplasm. It carries out the reaction N-acetyl-L-glutamate 5-semialdehyde + phosphate + NADP(+) = N-acetyl-L-glutamyl 5-phosphate + NADPH + H(+). It functions in the pathway amino-acid biosynthesis; L-arginine biosynthesis; N(2)-acetyl-L-ornithine from L-glutamate: step 3/4. Catalyzes the NADPH-dependent reduction of N-acetyl-5-glutamyl phosphate to yield N-acetyl-L-glutamate 5-semialdehyde. This Lachnoclostridium phytofermentans (strain ATCC 700394 / DSM 18823 / ISDg) (Clostridium phytofermentans) protein is N-acetyl-gamma-glutamyl-phosphate reductase.